Reading from the N-terminus, the 123-residue chain is Putative acidic leucine-rich nuclear phosphoprotein 32 family member C (123 aa).

LRR repeat units lie at residues E43–N64, K65–C87, N89–K110, and N114–C123.

It belongs to the ANP32 family.

This Mus musculus (Mouse) protein is Putative acidic leucine-rich nuclear phosphoprotein 32 family member C (Anp32c).